Here is a 197-residue protein sequence, read N- to C-terminus: GTP cyclohydrolase-2 (197 aa).

49–53 (RVHSE) is a binding site for GTP. Cysteine 54, cysteine 65, and cysteine 67 together coordinate Zn(2+). GTP contacts are provided by residues glutamine 70, 92–94 (EGR), and threonine 114. Residue aspartate 126 is the Proton acceptor of the active site. Arginine 128 serves as the catalytic Nucleophile. Residues threonine 149 and lysine 154 each contribute to the GTP site.

Belongs to the GTP cyclohydrolase II family. As to quaternary structure, homodimer. Zn(2+) serves as cofactor.

The catalysed reaction is GTP + 4 H2O = 2,5-diamino-6-hydroxy-4-(5-phosphoribosylamino)-pyrimidine + formate + 2 phosphate + 3 H(+). Its pathway is cofactor biosynthesis; riboflavin biosynthesis; 5-amino-6-(D-ribitylamino)uracil from GTP: step 1/4. Its function is as follows. Catalyzes the conversion of GTP to 2,5-diamino-6-ribosylamino-4(3H)-pyrimidinone 5'-phosphate (DARP), formate and pyrophosphate. In Cronobacter sakazakii (strain ATCC BAA-894) (Enterobacter sakazakii), this protein is GTP cyclohydrolase-2.